A 78-amino-acid polypeptide reads, in one-letter code: Defensin-like protein 287 (78 aa).

An N-terminal signal peptide occupies residues 1 to 24; the sequence is MNNLRVIMSVLLAVLVFTATVSES. 3 disulfides stabilise this stretch: C39-C59, C45-C64, and C51-C66.

Belongs to the DEFL family.

Its subcellular location is the secreted. This chain is Defensin-like protein 287, found in Arabidopsis thaliana (Mouse-ear cress).